The following is a 206-amino-acid chain: Small ribosomal subunit protein uS4 (206 aa).

One can recognise an S4 RNA-binding domain in the interval R96–D157.

The protein belongs to the universal ribosomal protein uS4 family. As to quaternary structure, part of the 30S ribosomal subunit. Contacts protein S5. The interaction surface between S4 and S5 is involved in control of translational fidelity.

Its function is as follows. One of the primary rRNA binding proteins, it binds directly to 16S rRNA where it nucleates assembly of the body of the 30S subunit. In terms of biological role, with S5 and S12 plays an important role in translational accuracy. The polypeptide is Small ribosomal subunit protein uS4 (Thioalkalivibrio sulfidiphilus (strain HL-EbGR7)).